A 533-amino-acid chain; its full sequence is Probable anion transporter 4, chloroplastic (533 aa).

The next 12 helical transmembrane spans lie at Met-117–Val-137, Ile-152–Val-172, Val-179–Ala-199, Leu-203–Cys-223, Ile-243–Met-263, Gly-267–Leu-287, Val-342–Ile-362, Ala-376–Trp-396, Ile-417–Val-437, Ala-438–Ile-458, Met-474–Val-494, and Gly-502–Ala-522.

This sequence belongs to the major facilitator superfamily. Sodium/anion cotransporter (TC 2.A.1.14) family. Expressed in leaf veins and root tips.

The protein localises to the plastid. It localises to the chloroplast membrane. Its function is as follows. Inorganic phosphate and probable anion transporter. The protein is Probable anion transporter 4, chloroplastic (ANTR4) of Arabidopsis thaliana (Mouse-ear cress).